A 161-amino-acid polypeptide reads, in one-letter code: Putative outer membrane protein YedS (161 aa).

The first 21 residues, 1–21, serve as a signal peptide directing secretion; it reads MKRKVLAMLVPALLVAGAANA.

This sequence belongs to the Gram-negative porin family.

It is found in the cell outer membrane. This Escherichia coli (strain K12) protein is Putative outer membrane protein YedS (yedS).